We begin with the raw amino-acid sequence, 281 residues long: Bifunctional protein FolD (281 aa).

NADP(+) is bound by residues 165-167, threonine 192, and valine 233; that span reads GRG.

The protein belongs to the tetrahydrofolate dehydrogenase/cyclohydrolase family. Homodimer.

The enzyme catalyses (6R)-5,10-methylene-5,6,7,8-tetrahydrofolate + NADP(+) = (6R)-5,10-methenyltetrahydrofolate + NADPH. It catalyses the reaction (6R)-5,10-methenyltetrahydrofolate + H2O = (6R)-10-formyltetrahydrofolate + H(+). Its pathway is one-carbon metabolism; tetrahydrofolate interconversion. Its function is as follows. Catalyzes the oxidation of 5,10-methylenetetrahydrofolate to 5,10-methenyltetrahydrofolate and then the hydrolysis of 5,10-methenyltetrahydrofolate to 10-formyltetrahydrofolate. This Mycobacterium ulcerans (strain Agy99) protein is Bifunctional protein FolD.